A 724-amino-acid polypeptide reads, in one-letter code: Actin-related protein 5 (724 aa).

Disordered stretches follow at residues 358–391 (QSLR…LMNV), 412–450 (TTAE…ESYL), and 467–488 (KKRL…IGRG). Residues 414–446 (AEGRLRARQKRNEEELEKEKRNQLEEERRRENP) are compositionally biased toward basic and acidic residues. The residue at position 542 (Ser-542) is a Phosphoserine.

Belongs to the actin family. ARP5 subfamily. As to quaternary structure, component of the INO80 chromatin-remodeling complex. Interacts with EEN. As to expression, expressed ubiquitously in seedlings, roots, leaves, buds, flowers and siliques.

It localises to the nucleus. It is found in the nucleoplasm. The protein resides in the cytoplasm. Probable subunit of a chromatin-remodeling complex. Involved in DNA repair. Required for multicellular development of all organs. In Arabidopsis thaliana (Mouse-ear cress), this protein is Actin-related protein 5.